The sequence spans 336 residues: Glycerol-3-phosphate dehydrogenase [NAD(P)+] (336 aa).

Residues Ser-16, Tyr-17, His-37, and Lys-111 each coordinate NADPH. Positions 111, 140, and 142 each coordinate sn-glycerol 3-phosphate. Position 144 (Ala-144) interacts with NADPH. Positions 196, 249, 259, 260, and 261 each coordinate sn-glycerol 3-phosphate. The active-site Proton acceptor is the Lys-196. Arg-260 lines the NADPH pocket. 2 residues coordinate NADPH: Val-284 and Glu-286.

The protein belongs to the NAD-dependent glycerol-3-phosphate dehydrogenase family.

The protein localises to the cytoplasm. It carries out the reaction sn-glycerol 3-phosphate + NAD(+) = dihydroxyacetone phosphate + NADH + H(+). It catalyses the reaction sn-glycerol 3-phosphate + NADP(+) = dihydroxyacetone phosphate + NADPH + H(+). Its pathway is membrane lipid metabolism; glycerophospholipid metabolism. In terms of biological role, catalyzes the reduction of the glycolytic intermediate dihydroxyacetone phosphate (DHAP) to sn-glycerol 3-phosphate (G3P), the key precursor for phospholipid synthesis. The sequence is that of Glycerol-3-phosphate dehydrogenase [NAD(P)+] from Glaesserella parasuis serovar 5 (strain SH0165) (Haemophilus parasuis).